Reading from the N-terminus, the 96-residue chain is MTEIFLFHLKAKHKLLQAEENNYSNDPVYEEIQPLSEECNRNTTSLNDSIYDDVCYPEDDMYDDGCGAYTRLDASRVDYGQLRTCNGDSHIYEEIG.

This is an uncharacterized protein from Saimiriine herpesvirus 2 (strain 11) (SaHV-2).